The primary structure comprises 286 residues: tRNA (guanine-N(1)-)-methyltransferase (286 aa).

S-adenosyl-L-methionine-binding positions include Gly116 and 140 to 145 (IGDYVL). Residues 232 to 286 (DALPPGSLTPHEEALAAEARLHAGRSAETPPPAGAAGSQAEGPPGTSPSDAAVAH) form a disordered region.

Belongs to the RNA methyltransferase TrmD family. As to quaternary structure, homodimer.

Its subcellular location is the cytoplasm. The catalysed reaction is guanosine(37) in tRNA + S-adenosyl-L-methionine = N(1)-methylguanosine(37) in tRNA + S-adenosyl-L-homocysteine + H(+). In terms of biological role, specifically methylates guanosine-37 in various tRNAs. The polypeptide is tRNA (guanine-N(1)-)-methyltransferase (Acidothermus cellulolyticus (strain ATCC 43068 / DSM 8971 / 11B)).